A 639-amino-acid chain; its full sequence is Chaperone protein DnaK (639 aa).

Residue T198 is modified to Phosphothreonine; by autocatalysis. Positions 603-618 (AKAQTQGGAQEGAAKQ) are enriched in low complexity. The segment at 603-639 (AKAQTQGGAQEGAAKQSNATADDVVDAEFEEVKDDKK) is disordered. A compositionally biased stretch (acidic residues) spans 625–639 (DVVDAEFEEVKDDKK).

This sequence belongs to the heat shock protein 70 family.

Functionally, acts as a chaperone. In Shewanella sp. (strain MR-4), this protein is Chaperone protein DnaK.